The chain runs to 417 residues: Serine hydroxymethyltransferase 1 (417 aa).

Residues Leu-121 and 125–127 each bind (6S)-5,6,7,8-tetrahydrofolate; that span reads GHL. At Lys-229 the chain carries N6-(pyridoxal phosphate)lysine. 354 to 356 serves as a coordination point for (6S)-5,6,7,8-tetrahydrofolate; it reads SPF.

This sequence belongs to the SHMT family. In terms of assembly, homodimer. Requires pyridoxal 5'-phosphate as cofactor.

The protein resides in the cytoplasm. The enzyme catalyses (6R)-5,10-methylene-5,6,7,8-tetrahydrofolate + glycine + H2O = (6S)-5,6,7,8-tetrahydrofolate + L-serine. The protein operates within one-carbon metabolism; tetrahydrofolate interconversion. It participates in amino-acid biosynthesis; glycine biosynthesis; glycine from L-serine: step 1/1. Functionally, catalyzes the reversible interconversion of serine and glycine with tetrahydrofolate (THF) serving as the one-carbon carrier. This reaction serves as the major source of one-carbon groups required for the biosynthesis of purines, thymidylate, methionine, and other important biomolecules. Also exhibits THF-independent aldolase activity toward beta-hydroxyamino acids, producing glycine and aldehydes, via a retro-aldol mechanism. This Pseudomonas savastanoi pv. phaseolicola (strain 1448A / Race 6) (Pseudomonas syringae pv. phaseolicola (strain 1448A / Race 6)) protein is Serine hydroxymethyltransferase 1.